A 401-amino-acid polypeptide reads, in one-letter code: 1-deoxy-D-xylulose 5-phosphate reductoisomerase (401 aa).

NADPH is bound by residues Thr10, Gly11, Ser12, Ile13, Gly36, Asn38, and Asn124. Lys125 serves as a coordination point for 1-deoxy-D-xylulose 5-phosphate. Residue Glu126 participates in NADPH binding. Asp150 serves as a coordination point for Mn(2+). 1-deoxy-D-xylulose 5-phosphate-binding residues include Ser151, Glu152, Ser186, and His209. Glu152 is a binding site for Mn(2+). Gly215 is an NADPH binding site. Residues Ser222, Asn227, Lys228, and Glu231 each contribute to the 1-deoxy-D-xylulose 5-phosphate site. Glu231 contacts Mn(2+).

Belongs to the DXR family. Mg(2+) is required as a cofactor. Mn(2+) serves as cofactor.

It carries out the reaction 2-C-methyl-D-erythritol 4-phosphate + NADP(+) = 1-deoxy-D-xylulose 5-phosphate + NADPH + H(+). It functions in the pathway isoprenoid biosynthesis; isopentenyl diphosphate biosynthesis via DXP pathway; isopentenyl diphosphate from 1-deoxy-D-xylulose 5-phosphate: step 1/6. In terms of biological role, catalyzes the NADPH-dependent rearrangement and reduction of 1-deoxy-D-xylulose-5-phosphate (DXP) to 2-C-methyl-D-erythritol 4-phosphate (MEP). In Vibrio parahaemolyticus serotype O3:K6 (strain RIMD 2210633), this protein is 1-deoxy-D-xylulose 5-phosphate reductoisomerase.